A 115-amino-acid polypeptide reads, in one-letter code: Peptidyl-tRNA hydrolase (115 aa).

This sequence belongs to the PTH2 family.

The protein resides in the cytoplasm. The catalysed reaction is an N-acyl-L-alpha-aminoacyl-tRNA + H2O = an N-acyl-L-amino acid + a tRNA + H(+). Functionally, the natural substrate for this enzyme may be peptidyl-tRNAs which drop off the ribosome during protein synthesis. The polypeptide is Peptidyl-tRNA hydrolase (pth) (Nanoarchaeum equitans (strain Kin4-M)).